The chain runs to 213 residues: 3-isopropylmalate dehydratase small subunit (213 aa).

It belongs to the LeuD family. LeuD type 1 subfamily. As to quaternary structure, heterodimer of LeuC and LeuD.

The enzyme catalyses (2R,3S)-3-isopropylmalate = (2S)-2-isopropylmalate. It functions in the pathway amino-acid biosynthesis; L-leucine biosynthesis; L-leucine from 3-methyl-2-oxobutanoate: step 2/4. Its function is as follows. Catalyzes the isomerization between 2-isopropylmalate and 3-isopropylmalate, via the formation of 2-isopropylmaleate. This is 3-isopropylmalate dehydratase small subunit from Pseudomonas syringae pv. tomato (strain ATCC BAA-871 / DC3000).